Consider the following 393-residue polypeptide: Putative bacilysin exporter BacE (393 aa).

Helical transmembrane passes span 11-31 (LLFG…ALLI), 43-63 (SGVI…GVLV), 69-89 (VKIM…LTFL), 92-112 (GEYP…GVFF), 133-155 (LFAK…FLLG), 160-177 (LAVA…FFIS), 215-235 (MFTM…FPIV), 244-264 (IGNF…AALV), 287-307 (ALFL…LFFI), and 353-373 (IVDA…LFLH).

It belongs to the major facilitator superfamily.

It is found in the cell membrane. Part of the bacilysin biosynthesis operon. May be involved in self-resistance to bacilysin by permitting efflux of this antibiotic. In Bacillus amyloliquefaciens (Bacillus velezensis), this protein is Putative bacilysin exporter BacE (bacE).